The chain runs to 298 residues: uncharacterized protein (298 aa).

The active site involves D119.

Belongs to the pseudouridine synthase RluA family.

The enzyme catalyses a uridine in RNA = a pseudouridine in RNA. This is an uncharacterized protein from Helicobacter pylori (strain ATCC 700392 / 26695) (Campylobacter pylori).